The chain runs to 297 residues: Alpha/beta-gliadin A-IV (297 aa).

Residues 1–20 (MKTFLILALRAIVATTATIA) form the signal peptide. A compositionally biased stretch (low complexity) spans 29–55 (QPQNPSQQQPQKQVPLVQQQQFPGQQQ). 2 disordered regions span residues 29-127 (QPQN…QQQQ) and 234-257 (QYPS…SVQP). A compositionally biased stretch (pro residues) spans 56-67 (PFPPQQPYPQQQ). Residues 68–80 (PFPSQQPYMQLQP) show a composition bias toward low complexity. Residues 81–101 (FPQPQLPYPQPQLPYPQPQPF) are compositionally biased toward pro residues. 2 stretches are compositionally biased toward low complexity: residues 102-127 (RPQQ…QQQQ) and 234-250 (QYPS…QNPQ).

Belongs to the gliadin/glutenin family. Substrate of transglutaminase.

Its function is as follows. Gliadin is the major seed storage protein in wheat. In Triticum aestivum (Wheat), this protein is Alpha/beta-gliadin A-IV.